Consider the following 380-residue polypeptide: MKNVSILGSTGSIGTQTLDVIRRNADINVVALAAGTRVSDLAEQVREFKPQLVCIGKEELVPELKTLIGDMDVKIVSGDEGLIEAATIESAEIVVTAVVGMMGITPTVEAIKAHKDIALANKETLVCAGHIIMSLAKECNVNIYPVDSEHSAIFQCLNGERRGEIEKILLTASGGPFRGKKRADLENVQLEDALKHPNWAMGRKITIDSSTMVNKGLEVMEAQWLFGVPAEKVQVIVQPQSIIHSMVEFKDGAVMAQLGSPDMRLPIQYALYYPERRKLNTERLDFYELAKITFEKPDMETFKGLKLAYEAAARGGNIPTALNAANEVAVARFLDRKIKYLDIPDIIEYAMNEVDYINNPTVEQILSTQKIVTDMIESRW.

Positions 10, 11, 12, 13, 35, and 121 each coordinate NADPH. Lys-122 is a binding site for 1-deoxy-D-xylulose 5-phosphate. Glu-123 provides a ligand contact to NADPH. Residue Asp-147 participates in Mn(2+) binding. Residues Ser-148, Glu-149, Ser-173, and His-196 each contribute to the 1-deoxy-D-xylulose 5-phosphate site. Mn(2+) is bound at residue Glu-149. Residue Gly-202 coordinates NADPH. 1-deoxy-D-xylulose 5-phosphate-binding residues include Ser-209, Asn-214, Lys-215, and Glu-218. Residue Glu-218 participates in Mn(2+) binding.

The protein belongs to the DXR family. Requires Mg(2+) as cofactor. Mn(2+) is required as a cofactor.

It carries out the reaction 2-C-methyl-D-erythritol 4-phosphate + NADP(+) = 1-deoxy-D-xylulose 5-phosphate + NADPH + H(+). It participates in isoprenoid biosynthesis; isopentenyl diphosphate biosynthesis via DXP pathway; isopentenyl diphosphate from 1-deoxy-D-xylulose 5-phosphate: step 1/6. Its function is as follows. Catalyzes the NADPH-dependent rearrangement and reduction of 1-deoxy-D-xylulose-5-phosphate (DXP) to 2-C-methyl-D-erythritol 4-phosphate (MEP). The polypeptide is 1-deoxy-D-xylulose 5-phosphate reductoisomerase (Lachnospira eligens (strain ATCC 27750 / DSM 3376 / VPI C15-48 / C15-B4) (Eubacterium eligens)).